The sequence spans 492 residues: Dynein regulatory complex subunit 2 (492 aa).

Coiled-coil stretches lie at residues 16–95, 256–318, and 373–401; these read LTEE…FERV, VQSA…AAQA, and LSEE…HDYS.

Belongs to the DRC2 family. As to quaternary structure, component of the nexin-dynein regulatory complex (N-DRC).

Its subcellular location is the cytoplasm. It is found in the cytoskeleton. It localises to the flagellum basal body. The protein localises to the cell projection. The protein resides in the cilium. Its subcellular location is the flagellum. It is found in the flagellum axoneme. In terms of biological role, component of the nexin-dynein regulatory complex (N-DRC), a key regulator of ciliary/flagellar motility which maintains the alignment and integrity of the distal axoneme and regulates microtubule sliding in motile axonemes. Plays a critical role in the assembly of N-DRC and also stabilizes the assembly of multiple inner dynein arms and radial spokes. Coassembles with DRC1 to form a central scaffold needed for assembly of the N-DRC and its attachment to the outer doublet microtubules. This chain is Dynein regulatory complex subunit 2 (ccdc65), found in Danio rerio (Zebrafish).